Consider the following 923-residue polypeptide: Hexokinase-3 (923 aa).

The segment covering 1-18 (MDSIGSSGLRQGEETLSC) has biased composition (polar residues). A disordered region spans residues 1-30 (MDSIGSSGLRQGEETLSCSEEGLPGPSDSS). Hexokinase domains lie at 27–471 (SDSS…MVTA) and 477–912 (AAHR…LVTA). The segment at 84 to 220 (HGTEQGDFVV…AYNIDVVAVV (137 aa)) is hexokinase small subdomain 1. 95–102 (ELGATGAS) serves as a coordination point for ATP. 95 to 104 (ELGATGASLR) provides a ligand contact to D-glucose 6-phosphate. D-glucose is bound by residues serine 168, 185–186 (TK), and 221–222 (ND). The segment at 221 to 460 (NDTVGTMMGC…CDVSLIPSVD (240 aa)) is hexokinase large subdomain 1. Residues aspartate 222 and threonine 245 each contribute to the D-glucose 6-phosphate site. D-glucose contacts are provided by residues asparagine 248, glutamate 273, and 304-307 (QRFE). 426-428 (GGR) is a D-glucose 6-phosphate binding site. ATP is bound by residues 438–439 (SV) and 542–547 (DLGGTN). Positions 531–661 (DGSERGDFLA…AVELNVVAIV (131 aa)) are hexokinase small subdomain 2. 542-546 (DLGGT) is a D-glucose 6-phosphate binding site. D-glucose-binding positions include 609-610 (SF), 626-627 (TK), and 662-663 (ND). Positions 662–901 (NDTVGTMMSC…CVVTFLQSED (240 aa)) are hexokinase large subdomain 2. Residues aspartate 663 and threonine 686 each contribute to the D-glucose 6-phosphate site. Threonine 686 lines the ATP pocket. Residues 688 to 689 (TN), glutamate 714, and glutamate 748 each bind D-glucose. ATP-binding positions include 753–754 (GM), 790–794 (TKFLS), and 869–873 (TLYKL). D-glucose 6-phosphate is bound by residues 867-869 (DGT) and serine 903.

Belongs to the hexokinase family.

It catalyses the reaction a D-hexose + ATP = a D-hexose 6-phosphate + ADP + H(+). The catalysed reaction is D-fructose + ATP = D-fructose 6-phosphate + ADP + H(+). It carries out the reaction D-glucose + ATP = D-glucose 6-phosphate + ADP + H(+). It functions in the pathway carbohydrate metabolism; hexose metabolism. The protein operates within carbohydrate degradation; glycolysis; D-glyceraldehyde 3-phosphate and glycerone phosphate from D-glucose: step 1/4. Its activity is regulated as follows. Hexokinase is an allosteric enzyme inhibited by its product D-glucose 6-phosphate. Its function is as follows. Catalyzes the phosphorylation of hexose, such as D-glucose and D-fructose, to hexose 6-phosphate (D-glucose 6-phosphate and D-fructose 6-phosphate, respectively). Mediates the initial step of glycolysis by catalyzing phosphorylation of D-glucose to D-glucose 6-phosphate. The sequence is that of Hexokinase-3 from Homo sapiens (Human).